The chain runs to 226 residues: Protein FMP52, mitochondrial (226 aa).

It belongs to the FMP52 family.

The protein localises to the mitochondrion outer membrane. The chain is Protein FMP52, mitochondrial (FMP52) from Debaryomyces hansenii (strain ATCC 36239 / CBS 767 / BCRC 21394 / JCM 1990 / NBRC 0083 / IGC 2968) (Yeast).